Here is a 344-residue protein sequence, read N- to C-terminus: Cell adhesion molecule CEACAM6 (344 aa).

A signal peptide spans 1-34; that stretch reads MGPPSAPPCRLHVPWKEVLLTASLLTFWNPPTTA. The region spanning 35–142 is the Ig-like V-type domain; sequence KLTIESTPFN…EATGQFHVYP (108 aa). Residues Asn104, Asn111, Asn115, Asn152, Asn173, Asn197, Asn224, Asn256, Asn274, Asn288, Asn292, and Asn309 are each glycosylated (N-linked (GlcNAc...) asparagine). Ig-like C2-type domains follow at residues 145-232 and 240-314; these read PKPS…VTLN and PTIS…TTVT. An intrachain disulfide couples Cys167 to Cys215. Cysteines 259 and 299 form a disulfide. Gly320 carries the GPI-anchor amidated glycine lipid modification. Residues 321–344 constitute a propeptide, removed in mature form; sequence SAPVLSAVATVGITIGVLARVALI.

This sequence belongs to the immunoglobulin superfamily. CEA family. Homodimer; homodimerizes via its Ig-like V-type domain. Heterodimer with CEACAM8; heterodimerizes via its Ig-like V-type domain. Glycosylated. Expressed in neutrophils. Expressed in columnar epithelial and goblet cells of the colon. Expressed in numerous tumor cell lines (at protein level).

It localises to the cell membrane. The protein localises to the apical cell membrane. It is found in the cell surface. Its function is as follows. Cell surface glycoprotein that plays a role in cell adhesion and tumor progression. Intercellular adhesion occurs in a calcium- and fibronectin-independent manner. Mediates homophilic and heterophilic cell adhesion with other carcinoembryonic antigen-related cell adhesion molecules, such as CEACAM5 and CEACAM8. Heterophilic interaction with CEACAM8 occurs in activated neutrophils. Plays a role in neutrophil adhesion to cytokine-activated endothelial cells. Plays a role in cell migration and cell adhesion to endothelial cells. The polypeptide is Cell adhesion molecule CEACAM6 (Homo sapiens (Human)).